The following is a 155-amino-acid chain: Ribosome maturation factor RimP (155 aa).

It belongs to the RimP family.

The protein resides in the cytoplasm. Its function is as follows. Required for maturation of 30S ribosomal subunits. The sequence is that of Ribosome maturation factor RimP from Deinococcus geothermalis (strain DSM 11300 / CIP 105573 / AG-3a).